A 234-amino-acid polypeptide reads, in one-letter code: Large ribosomal subunit protein uL1 (234 aa).

The protein belongs to the universal ribosomal protein uL1 family. Part of the 50S ribosomal subunit.

In terms of biological role, binds directly to 23S rRNA. The L1 stalk is quite mobile in the ribosome, and is involved in E site tRNA release. Its function is as follows. Protein L1 is also a translational repressor protein, it controls the translation of the L11 operon by binding to its mRNA. The sequence is that of Large ribosomal subunit protein uL1 from Syntrophobacter fumaroxidans (strain DSM 10017 / MPOB).